Consider the following 183-residue polypeptide: Glutathione-regulated potassium-efflux system ancillary protein KefG (183 aa).

The protein belongs to the NAD(P)H dehydrogenase (quinone) family. KefG subfamily. As to quaternary structure, interacts with KefB.

Its subcellular location is the cell inner membrane. The catalysed reaction is a quinone + NADH + H(+) = a quinol + NAD(+). The enzyme catalyses a quinone + NADPH + H(+) = a quinol + NADP(+). Its function is as follows. Regulatory subunit of a potassium efflux system that confers protection against electrophiles. Required for full activity of KefB. The chain is Glutathione-regulated potassium-efflux system ancillary protein KefG from Pectobacterium carotovorum subsp. carotovorum (strain PC1).